The primary structure comprises 363 residues: D-proline dehydrogenase (363 aa).

3–17 (VAIVGGGIIGLFTAY) is a binding site for FAD.

This sequence belongs to the DadA oxidoreductase family. As to quaternary structure, homotetramer. It depends on FAD as a cofactor.

The protein localises to the cell membrane. The catalysed reaction is D-proline + A = 1-pyrroline-2-carboxylate + AH2. Functionally, catalyzes the dehydrogenation of D-proline. Can also use other D-amino acids, but with lower efficiency. The polypeptide is D-proline dehydrogenase (dpdh) (Pyrobaculum islandicum (strain DSM 4184 / JCM 9189 / GEO3)).